The following is a 292-amino-acid chain: Probable alpha-L-glutamate ligase (292 aa).

The ATP-grasp domain maps to 104–287 (HQLLAAKGID…VATRIIEHVE (184 aa)). ATP-binding positions include K141, 178 to 179 (EF), D187, and 211 to 213 (RSN). Mg(2+) contacts are provided by D248, E260, and N262. Residues D248, E260, and N262 each coordinate Mn(2+).

The protein belongs to the RimK family. Mg(2+) serves as cofactor. Mn(2+) is required as a cofactor.

In Stenotrophomonas maltophilia (strain K279a), this protein is Probable alpha-L-glutamate ligase.